The primary structure comprises 402 residues: Protein rds1 (402 aa).

Its function is as follows. May have a function in stress-related responses of the cell. This Schizosaccharomyces pombe (strain 972 / ATCC 24843) (Fission yeast) protein is Protein rds1 (rds1).